Consider the following 145-residue polypeptide: MYCRMEFNFFMNDVVQMARKEMVESGYDQLTTPEEVDEVLKEKGTVLVMVNSVCGCAGGIARPAAAYMKNYDKKPDRFVTVFAGQDKEATARAREYFKGYAPSSPSFALLKDGEIQMMVERHEIEGHEPIQVVQKLEKAFDQYCS.

It belongs to the bacilliredoxin family.

In Halalkalibacterium halodurans (strain ATCC BAA-125 / DSM 18197 / FERM 7344 / JCM 9153 / C-125) (Bacillus halodurans), this protein is Bacilliredoxin BH2759.